Here is a 427-residue protein sequence, read N- to C-terminus: Sialic acid TRAP transporter large permease protein SiaM (427 aa).

The next 12 membrane-spanning stretches (helical) occupy residues 11-31, 52-72, 82-102, 140-160, 165-185, 214-234, 246-266, 270-290, 301-321, 322-342, 348-368, and 394-414; these read LLFA…AFLI, FTLL…SAGI, SLVG…SLLF, ASCI…YGVV, IGAL…ALMV, AFLS…GKFT, ALFL…IEIL, VNTT…GWIV, DYFL…NLLL, LFLG…PFLV, VGID…IGIL, and VLPL…FPQF.

It belongs to the TRAP transporter large permease family. As to quaternary structure, the complex comprises the extracytoplasmic solute receptor protein SiaP, and the two transmembrane proteins SiaQ and SiaM. SiaQ and SiaM form a tight 1:1 complex.

The protein resides in the cell inner membrane. Part of the tripartite ATP-independent periplasmic (TRAP) transport system SiaPQM that catalyzes unidirectional Na(+)-dependent sialic acid uptake. In Vibrio cholerae serotype O1 (strain ATCC 39315 / El Tor Inaba N16961), this protein is Sialic acid TRAP transporter large permease protein SiaM.